We begin with the raw amino-acid sequence, 285 residues long: NADH-cytochrome b5 reductase 1 (285 aa).

A helical membrane pass occupies residues L7–S23. The FAD-binding FR-type domain occupies T40–V144. Residues G124–G139 and H150–L182 contribute to the FAD site.

The protein belongs to the flavoprotein pyridine nucleotide cytochrome reductase family. As to quaternary structure, monomer. Component of the 2-(3-amino-3-carboxypropyl)histidine synthase complex composed of DPH1, DPH2, DPH3 and a NADH-dependent reductase, predominantly CBR1. FAD serves as cofactor.

It is found in the mitochondrion outer membrane. It catalyses the reaction 2 Fe(III)-[cytochrome b5] + NADH = 2 Fe(II)-[cytochrome b5] + NAD(+) + H(+). The enzyme catalyses 2 Fe(3+)-[Dph3] + NADH = 2 Fe(2+)-[Dph3] + NAD(+) + H(+). It functions in the pathway protein modification; peptidyl-diphthamide biosynthesis. In terms of biological role, NADH-dependent reductase for DPH3 and cytochrome b5. Required for the first step of diphthamide biosynthesis, a post-translational modification of histidine which occurs in elongation factor 2. DPH1 and DPH2 transfer a 3-amino-3-carboxypropyl (ACP) group from S-adenosyl-L-methionine (SAM) to a histidine residue, the reaction is assisted by a reduction system comprising DPH3 and a NADH-dependent reductase, predominantly CBR1. By reducing DPH3, also involved in the formation of the tRNA wobble base modification mcm5s 2U (5-methoxycarbonylmethyl-2-thiouridine), mediated by the elongator complex. The cytochrome b5/NADH cytochrome b5 reductase electron transfer system supports the catalytic activity of several sterol biosynthetic enzymes. This is NADH-cytochrome b5 reductase 1 (CBR1) from Candida glabrata (strain ATCC 2001 / BCRC 20586 / JCM 3761 / NBRC 0622 / NRRL Y-65 / CBS 138) (Yeast).